Reading from the N-terminus, the 72-residue chain is Translation initiation factor IF-1 (72 aa).

The S1-like domain occupies 1–72 (MAGNDVIEIE…TKGRITYRHK (72 aa)).

It belongs to the IF-1 family. As to quaternary structure, component of the 30S ribosomal translation pre-initiation complex which assembles on the 30S ribosome in the order IF-2 and IF-3, IF-1 and N-formylmethionyl-tRNA(fMet); mRNA recruitment can occur at any time during PIC assembly.

It localises to the cytoplasm. One of the essential components for the initiation of protein synthesis. Stabilizes the binding of IF-2 and IF-3 on the 30S subunit to which N-formylmethionyl-tRNA(fMet) subsequently binds. Helps modulate mRNA selection, yielding the 30S pre-initiation complex (PIC). Upon addition of the 50S ribosomal subunit IF-1, IF-2 and IF-3 are released leaving the mature 70S translation initiation complex. This Oenococcus oeni (strain ATCC BAA-331 / PSU-1) protein is Translation initiation factor IF-1.